The sequence spans 119 residues: Integration host factor subunit beta (119 aa).

The segment at 91-119 (DLVGNDQGDDSSNGSSDPLQSVMDMHAMH) is disordered. Residues 94-107 (GNDQGDDSSNGSSD) are compositionally biased toward low complexity.

The protein belongs to the bacterial histone-like protein family. As to quaternary structure, heterodimer of an alpha and a beta chain.

Its function is as follows. This protein is one of the two subunits of integration host factor, a specific DNA-binding protein that functions in genetic recombination as well as in transcriptional and translational control. This chain is Integration host factor subunit beta, found in Bordetella parapertussis (strain 12822 / ATCC BAA-587 / NCTC 13253).